Reading from the N-terminus, the 284-residue chain is RNase adapter protein RapZ (284 aa).

Residue 8-15 (GRSGSGKS) coordinates ATP. 56 to 59 (DVRN) serves as a coordination point for GTP. Residues 266–284 (RSRGKNVQSRHRTLEKRKT) are RNA-binding.

The protein belongs to the RapZ-like family. RapZ subfamily. Homotrimer.

Functionally, modulates the synthesis of GlmS, by affecting the processing and stability of the regulatory small RNA GlmZ. When glucosamine-6-phosphate (GlcN6P) concentrations are high in the cell, RapZ binds GlmZ and targets it to cleavage by RNase E. Consequently, GlmZ is inactivated and unable to activate GlmS synthesis. Under low GlcN6P concentrations, RapZ is sequestered and inactivated by an other regulatory small RNA, GlmY, preventing GlmZ degradation and leading to synthesis of GlmS. This chain is RNase adapter protein RapZ, found in Salmonella typhi.